The chain runs to 599 residues: Aspartate--tRNA(Asp/Asn) ligase (599 aa).

E172 is a binding site for L-aspartate. The interval 196 to 199 (QLFK) is aspartate. L-aspartate is bound at residue R218. ATP is bound by residues 218 to 220 (RDE) and Q227. H454 contributes to the L-aspartate binding site. ATP is bound at residue E488. R495 lines the L-aspartate pocket. 540-543 (GLDR) is a binding site for ATP.

This sequence belongs to the class-II aminoacyl-tRNA synthetase family. Type 1 subfamily. Homodimer.

The protein localises to the cytoplasm. The enzyme catalyses tRNA(Asx) + L-aspartate + ATP = L-aspartyl-tRNA(Asx) + AMP + diphosphate. Its function is as follows. Aspartyl-tRNA synthetase with relaxed tRNA specificity since it is able to aspartylate not only its cognate tRNA(Asp) but also tRNA(Asn). Reaction proceeds in two steps: L-aspartate is first activated by ATP to form Asp-AMP and then transferred to the acceptor end of tRNA(Asp/Asn). In Methylibium petroleiphilum (strain ATCC BAA-1232 / LMG 22953 / PM1), this protein is Aspartate--tRNA(Asp/Asn) ligase.